A 502-amino-acid chain; its full sequence is MTGQRTQHVHFLGIGGSGLSPLAQIHLAGGGTVSGSDSEDSPRVATLRARGVPIRIGATPGPAAFAAELAGADVVVASSALPDDHPEIVAARALGLPVRRRSEWLPELTAGYRLVAVAGSHGKSTTSAMLTLVLRAAGLDPTAVIGAEVSQLGGNALAGSGDVFVLESDEYGGAFAGLDPSIAVITNVEWEHPDVFPDEASVRTAFAAFARRVRPGGRLVVCGDHPGVVAVLTELGRQRPGNDVAVNDVAVIDYGFGAERHWRAVDVVTTAGDDMTRATVLRAGQEIGALTLTVPGRHSVLNALAVLATATELGVAPAQTLTTLTTFTGAARRFEFVGFWNGPADSTGVGPAGGPGSLEVIDDYAHHPTEVRLTLAAARSRARGRQIWTVLQPHTFSRFAALLDDFAAAFSDADRVYVTDIYAARETDDLGLHAVDLVKRVSEPAATYYVSWPELVERLATDVRVTLSDEASRGILLLTLGAGTITTVGPRLLAALGFSAAG.

119 to 125 (GSHGKST) serves as a coordination point for ATP.

It belongs to the MurCDEF family.

It is found in the cytoplasm. The enzyme catalyses UDP-N-acetyl-alpha-D-muramate + L-alanine + ATP = UDP-N-acetyl-alpha-D-muramoyl-L-alanine + ADP + phosphate + H(+). It participates in cell wall biogenesis; peptidoglycan biosynthesis. Cell wall formation. This chain is UDP-N-acetylmuramate--L-alanine ligase, found in Frankia casuarinae (strain DSM 45818 / CECT 9043 / HFP020203 / CcI3).